Consider the following 282-residue polypeptide: N-acetylaspartate synthetase (282 aa).

A helical membrane pass occupies residues 103–125 (FLTVMCYVMTKSFTLTFCAPFIL). An N-acetyltransferase domain is found at 110-269 (VMTKSFTLTF…RSPLERLFFQ (160 aa)).

The protein belongs to the NAT8 family.

Its subcellular location is the cytoplasm. The protein localises to the microsome membrane. It localises to the mitochondrion membrane. It is found in the endoplasmic reticulum membrane. It catalyses the reaction L-aspartate + acetyl-CoA = N-acetyl-L-aspartate + CoA + H(+). Functionally, catalyzes the synthesis of N-acetylaspartate acid (NAA) from L-aspartate and acetyl-CoA. The chain is N-acetylaspartate synthetase (nat8l) from Danio rerio (Zebrafish).